We begin with the raw amino-acid sequence, 118 residues long: Ribulose bisphosphate carboxylase small subunit (118 aa).

Belongs to the RuBisCO small chain family. As to quaternary structure, heterohexadecamer of 8 large and 8 small subunits.

Its function is as follows. RuBisCO catalyzes two reactions: the carboxylation of D-ribulose 1,5-bisphosphate, the primary event in carbon dioxide fixation, as well as the oxidative fragmentation of the pentose substrate. Both reactions occur simultaneously and in competition at the same active site. Although the small subunit is not catalytic it is essential for maximal activity. The chain is Ribulose bisphosphate carboxylase small subunit from Rhodobacter capsulatus (Rhodopseudomonas capsulata).